We begin with the raw amino-acid sequence, 328 residues long: Protein-glutamine deamidase Cif (328 aa).

Positions 1-68 (MLEHGVMKIP…TNRTGENPMI (68 aa)) are disordered. Residues 52 to 63 (RSSSISNTNRTG) are compositionally biased toward polar residues. Catalysis depends on residues Cys156, His211, and Gln231.

The protein belongs to the Cif family.

The protein resides in the secreted. Its subcellular location is the host nucleus. It carries out the reaction L-glutaminyl-[protein] + H2O = L-glutamyl-[protein] + NH4(+). In terms of biological role, protein-glutamine deamidase effector that inhibits the host cell cycle and other key cellular processes such as the actin network and programmed-cell death. Acts by mediating the side chain deamidation of 'Gln-40' of host NEDD8, converting it to glutamate, thereby abolishing the activity of cullin-RING-based E3 ubiquitin-protein ligase complexes (CRL complexes). Inactivation of CRL complexes prevents ubiquitination and subsequent degradation of the cyclin-dependent kinase inhibitors CDKN1A/p21 and CDKN1B/p27, leading to G1 and G2 cell cycle arrests in host cells. Deamidation of 'Gln-40' of host NEDD8 also triggers macrophage-specific programmed cell death. Also able to catalyze deamidation of 'Gln-40' of host ubiquitin in vitro; however, NEDD8 constitutes the preferred substrate in vivo. Also regulates the host NF-kappa-B signaling via activation of MAPK/ERK cascade: activation of host MAPK/ERK cascade is independent of CRL complexes inhibition, suggesting that Cif has other host protein targets than NEDD8. The polypeptide is Protein-glutamine deamidase Cif (Burkholderia pseudomallei (strain K96243)).